The following is a 403-amino-acid chain: Peroxisomal membrane protein PEX13 (403 aa).

A compositionally biased stretch (pro residues) spans 1–11 (MASQPPPPPKP). Residues 1–68 (MASQPPPPPK…PSQQTGSSSV (68 aa)) form a disordered region. Residues 1-134 (MASQPPPPPK…SSRGAFQSIE (134 aa)) are Peroxisomal matrix-facing. Positions 59–68 (PSQQTGSSSV) are enriched in polar residues. The chain crosses the membrane as a helical span at residues 135-155 (SIVHAFASVSMMMDATFSAVY). The segment at 145 to 233 (MMMDATFSAV…EDRAATSAKS (89 aa)) is targeting to peroxisomes. Residues 156-174 (NSFRAVLDVANHFSRLKIH) lie on the Cytoplasmic side of the membrane. The helical transmembrane segment at 175-192 (FTKVFSAFALVRTIRYLY) threads the bilayer. The tract at residues 175-196 (FTKVFSAFALVRTIRYLYRRLQ) is interaction with PEX19. The Peroxisomal matrix portion of the chain corresponds to 193–233 (RRLQRMLGLRRGSENEDLWAESEGTVACLGAEDRAATSAKS). A helical transmembrane segment spans residues 234–254 (WPIFLFFAVILGGPYLIWKLL). Residues 255-403 (STHSDEVTDS…IGKDGEKQDL (149 aa)) are Cytoplasmic-facing. Residues 272–336 (DDHVVARAEY…PANYVKILGK (65 aa)) enclose the SH3 domain. At Ser354 the chain carries Phosphoserine.

Belongs to the peroxin-13 family. In terms of assembly, interacts (via SH3 domain) with PEX14 (via SH3-binding motif); forming the PEX13-PEX14 docking complex. Interacts with PEX19.

It localises to the peroxisome membrane. In terms of biological role, component of the PEX13-PEX14 docking complex, a translocon channel that specifically mediates the import of peroxisomal cargo proteins bound to PEX5 receptor. The PEX13-PEX14 docking complex forms a large import pore which can be opened to a diameter of about 9 nm. Mechanistically, PEX5 receptor along with cargo proteins associates with the PEX14 subunit of the PEX13-PEX14 docking complex in the cytosol, leading to the insertion of the receptor into the organelle membrane with the concomitant translocation of the cargo into the peroxisome matrix. Involved in the import of PTS1- and PTS2-type containing proteins. This Homo sapiens (Human) protein is Peroxisomal membrane protein PEX13.